Reading from the N-terminus, the 101-residue chain is Small ribosomal subunit protein uS14 (101 aa).

Belongs to the universal ribosomal protein uS14 family. As to quaternary structure, part of the 30S ribosomal subunit. Contacts proteins S3 and S10.

In terms of biological role, binds 16S rRNA, required for the assembly of 30S particles and may also be responsible for determining the conformation of the 16S rRNA at the A site. The sequence is that of Small ribosomal subunit protein uS14 from Orientia tsutsugamushi (strain Boryong) (Rickettsia tsutsugamushi).